The primary structure comprises 513 residues: Histidine ammonia-lyase (513 aa).

A cross-link (5-imidazolinone (Ala-Gly)) is located at residues 145–147 (ASG). Ser146 bears the 2,3-didehydroalanine (Ser) mark.

The protein belongs to the PAL/histidase family. In terms of processing, contains an active site 4-methylidene-imidazol-5-one (MIO), which is formed autocatalytically by cyclization and dehydration of residues Ala-Ser-Gly.

It is found in the cytoplasm. It catalyses the reaction L-histidine = trans-urocanate + NH4(+). It functions in the pathway amino-acid degradation; L-histidine degradation into L-glutamate; N-formimidoyl-L-glutamate from L-histidine: step 1/3. In Vibrio vulnificus (strain CMCP6), this protein is Histidine ammonia-lyase.